The primary structure comprises 567 residues: Geranylgeranyl transferase type-2 subunit alpha (567 aa).

PFTA repeat units follow at residues Leu-44–Thr-78, Leu-88–Glu-122, Asn-124–Val-158, Ala-159–Pro-193, Val-207–Pro-241, and Val-363–Pro-397. Position 98 is a phosphoserine (Ser-98). LRR repeat units follow at residues Asp-442–Leu-463, Leu-464–Arg-486, Cys-487–Pro-508, Arg-509–Val-530, and Arg-534–Leu-555.

It belongs to the protein prenyltransferase subunit alpha family. As to quaternary structure, heterotrimer composed of RABGGTA, RABGGTB and CHM; within this trimer, RABGGTA and RABGGTB form the catalytic component B, while CHM (component A) mediates peptide substrate binding. The Rab GGTase dimer (RGGT) interacts with CHM (component A) prior to Rab protein binding; the association is stabilized by geranylgeranyl pyrophosphate (GGpp). The CHM:RGGT:Rab complex is destabilized by GGpp. Interacts with non-phosphorylated form of RAB8A; phosphorylation of RAB8A at 'Thr-72' disrupts this interaction. As to expression, most abundant in the heart, brain, spleen and liver. Less in the lung, muscle, kidney and testis; in these tissues less abundant than the beta subunit.

The catalysed reaction is geranylgeranyl diphosphate + L-cysteinyl-[protein] = S-geranylgeranyl-L-cysteinyl-[protein] + diphosphate. Its activity is regulated as follows. The enzymatic reaction requires the aid of a Rab escort protein (also called component A), such as CHM. In terms of biological role, catalyzes the transfer of a geranylgeranyl moiety from geranylgeranyl diphosphate to both cysteines of Rab proteins with the C-terminal sequence -XXCC, -XCXC and -CCXX, such as RAB1A, RAB3A, RAB5A and RAB7A. This chain is Geranylgeranyl transferase type-2 subunit alpha (Rabggta), found in Rattus norvegicus (Rat).